Reading from the N-terminus, the 186-residue chain is TATA-box-binding protein D (186 aa).

Repeat copies occupy residues I10–L86 and V101–L179.

This sequence belongs to the TBP family.

General factor that plays a role in the activation of archaeal genes transcribed by RNA polymerase. Binds specifically to the TATA box promoter element which lies close to the position of transcription initiation. The polypeptide is TATA-box-binding protein D (tbpD) (Halobacterium salinarum (strain ATCC 700922 / JCM 11081 / NRC-1) (Halobacterium halobium)).